The sequence spans 381 residues: Creatine kinase M-type (381 aa).

The Phosphagen kinase N-terminal domain maps to 11-98 (KLKFSAEEEF…FDPVIQDRHG (88 aa)). Residues 99–118 (GYKPTDKHRTDLNHENLKGG) form a disordered region. One can recognise a Phosphagen kinase C-terminal domain in the interval 125–367 (YVLSSRVRTG…KLMVEMEKKL (243 aa)). ATP is bound by residues 128-132 (SSRVR), H191, R236, R292, 320-325 (RGTGGV), and D335.

Belongs to the ATP:guanido phosphotransferase family. Dimer of identical or non-identical chains, which can be either B (brain type) or M (muscle type). With MM being the major form in skeletal muscle and myocardium, MB existing in myocardium, and BB existing in many tissues, especially brain. As to expression, predominantly found in skeletal muscle, but not in the heart.

Its subcellular location is the cytoplasm. It carries out the reaction creatine + ATP = N-phosphocreatine + ADP + H(+). Its function is as follows. Reversibly catalyzes the transfer of phosphate between ATP and various phosphogens (e.g. creatine phosphate). Creatine kinase isoenzymes play a central role in energy transduction in tissues with large, fluctuating energy demands, such as skeletal muscle, heart, brain and spermatozoa. The polypeptide is Creatine kinase M-type (Gallus gallus (Chicken)).